The sequence spans 1009 residues: Translation initiation factor IF-2 (1009 aa).

A disordered region spans residues 1-415 (MSDENENGRP…EREKEKRRGG (415 aa)). Positions 94 to 110 (EELRARQRVVDAAREAQ) are enriched in basic and acidic residues. A compositionally biased stretch (low complexity) spans 111–121 (ARQVAEQAAAE). Residues 122–136 (ARARAAQEAAQREAA) are compositionally biased toward basic and acidic residues. Positions 137–146 (AKAAAERAAA) are enriched in low complexity. Pro residues predominate over residues 147–174 (APPPVAQAPAAPAPAAPVTPPPAAPQAP). Over residues 175–189 (RPVAQAPVAPSAPRQ) the composition is skewed to low complexity. Basic and acidic residues-rich tracts occupy residues 208–218 (EPSRDRRDDRP) and 251–287 (PRPEGDRPRGPRPDGDRPQGDRGGYRGDRPQGDRPQG). Over residues 311 to 320 (GGPPRGPRPG) the composition is skewed to pro residues. Composition is skewed to basic and acidic residues over residues 346–358 (MDRRPDEDDDRRK) and 403–415 (RAREREKEKRRGG). Residues 505–675 (LRPPVVTIMG…LLQAEVLDLK (171 aa)) form the tr-type G domain. Residues 514–521 (GHVDHGKT) form a G1 region. GTP is bound at residue 514-521 (GHVDHGKT). Positions 539 to 543 (GITQH) are G2. Residues 561–564 (DTPG) form a G3 region. GTP is bound by residues 561–565 (DTPGH) and 615–618 (NKMD). The G4 stretch occupies residues 615–618 (NKMD). Positions 651–653 (SAK) are G5.

Belongs to the TRAFAC class translation factor GTPase superfamily. Classic translation factor GTPase family. IF-2 subfamily.

It is found in the cytoplasm. Its function is as follows. One of the essential components for the initiation of protein synthesis. Protects formylmethionyl-tRNA from spontaneous hydrolysis and promotes its binding to the 30S ribosomal subunits. Also involved in the hydrolysis of GTP during the formation of the 70S ribosomal complex. This Caulobacter vibrioides (strain ATCC 19089 / CIP 103742 / CB 15) (Caulobacter crescentus) protein is Translation initiation factor IF-2.